The following is a 761-amino-acid chain: Xaa-Pro dipeptidyl-peptidase (761 aa).

Catalysis depends on charge relay system residues serine 347, aspartate 467, and histidine 497.

The protein belongs to the peptidase S15 family. As to quaternary structure, homodimer.

The protein resides in the cytoplasm. The enzyme catalyses Hydrolyzes Xaa-Pro-|- bonds to release unblocked, N-terminal dipeptides from substrates including Ala-Pro-|-p-nitroanilide and (sequentially) Tyr-Pro-|-Phe-Pro-|-Gly-Pro-|-Ile.. In terms of biological role, removes N-terminal dipeptides sequentially from polypeptides having unsubstituted N-termini provided that the penultimate residue is proline. The polypeptide is Xaa-Pro dipeptidyl-peptidase (Streptococcus agalactiae serotype Ia (strain ATCC 27591 / A909 / CDC SS700)).